The chain runs to 122 residues: Small ribosomal subunit protein uS13 (122 aa).

Residues 99-122 (RGQRTHTNARTRKGPAKAIAGKKK) are disordered.

It belongs to the universal ribosomal protein uS13 family. As to quaternary structure, part of the 30S ribosomal subunit. Forms a loose heterodimer with protein S19. Forms two bridges to the 50S subunit in the 70S ribosome.

Its function is as follows. Located at the top of the head of the 30S subunit, it contacts several helices of the 16S rRNA. In the 70S ribosome it contacts the 23S rRNA (bridge B1a) and protein L5 of the 50S subunit (bridge B1b), connecting the 2 subunits; these bridges are implicated in subunit movement. Contacts the tRNAs in the A and P-sites. The polypeptide is Small ribosomal subunit protein uS13 (Cereibacter sphaeroides (strain ATCC 17025 / ATH 2.4.3) (Rhodobacter sphaeroides)).